The following is a 572-amino-acid chain: Phosphoenolpyruvate-protein phosphotransferase (572 aa).

The Tele-phosphohistidine intermediate role is filled by His191. Arg298 and Arg334 together coordinate phosphoenolpyruvate. Residues Glu433 and Asp457 each contribute to the Mg(2+) site. Phosphoenolpyruvate contacts are provided by residues Asn456–Asp457 and Arg467. Cys504 acts as the Proton donor in catalysis.

It belongs to the PEP-utilizing enzyme family. Homodimer. The cofactor is Mg(2+).

The protein localises to the cytoplasm. It carries out the reaction L-histidyl-[protein] + phosphoenolpyruvate = N(pros)-phospho-L-histidyl-[protein] + pyruvate. In terms of biological role, general (non sugar-specific) component of the phosphoenolpyruvate-dependent sugar phosphotransferase system (sugar PTS). This major carbohydrate active-transport system catalyzes the phosphorylation of incoming sugar substrates concomitantly with their translocation across the cell membrane. Enzyme I transfers the phosphoryl group from phosphoenolpyruvate (PEP) to the phosphoryl carrier protein (HPr). This chain is Phosphoenolpyruvate-protein phosphotransferase (ptsI), found in Staphylococcus aureus (strain Mu50 / ATCC 700699).